The sequence spans 269 residues: Protein-L-isoaspartate O-methyltransferase (269 aa).

The tract at residues Met-1–Gly-53 is disordered. The active site involves Ser-113.

The protein belongs to the methyltransferase superfamily. L-isoaspartyl/D-aspartyl protein methyltransferase family.

It is found in the cytoplasm. The enzyme catalyses [protein]-L-isoaspartate + S-adenosyl-L-methionine = [protein]-L-isoaspartate alpha-methyl ester + S-adenosyl-L-homocysteine. Functionally, catalyzes the methyl esterification of L-isoaspartyl residues in peptides and proteins that result from spontaneous decomposition of normal L-aspartyl and L-asparaginyl residues. It plays a role in the repair and/or degradation of damaged proteins. This is Protein-L-isoaspartate O-methyltransferase from Methylibium petroleiphilum (strain ATCC BAA-1232 / LMG 22953 / PM1).